Here is a 418-residue protein sequence, read N- to C-terminus: uncharacterized protein (418 aa).

This sequence belongs to the poxviruses C4/C10 family.

This is an uncharacterized protein from Fowlpox virus (strain NVSL) (FPV).